The sequence spans 424 residues: Serine--tRNA ligase (424 aa).

Residue 231 to 233 (TAE) participates in L-serine binding. Residue 262-264 (RAE) participates in ATP binding. Glutamate 285 is a binding site for L-serine. 349–352 (EISS) lines the ATP pocket. Residue serine 385 participates in L-serine binding.

The protein belongs to the class-II aminoacyl-tRNA synthetase family. Type-1 seryl-tRNA synthetase subfamily. In terms of assembly, homodimer. The tRNA molecule binds across the dimer.

Its subcellular location is the cytoplasm. It catalyses the reaction tRNA(Ser) + L-serine + ATP = L-seryl-tRNA(Ser) + AMP + diphosphate + H(+). It carries out the reaction tRNA(Sec) + L-serine + ATP = L-seryl-tRNA(Sec) + AMP + diphosphate + H(+). The protein operates within aminoacyl-tRNA biosynthesis; selenocysteinyl-tRNA(Sec) biosynthesis; L-seryl-tRNA(Sec) from L-serine and tRNA(Sec): step 1/1. Catalyzes the attachment of serine to tRNA(Ser). Is also able to aminoacylate tRNA(Sec) with serine, to form the misacylated tRNA L-seryl-tRNA(Sec), which will be further converted into selenocysteinyl-tRNA(Sec). This Geobacillus sp. (strain WCH70) protein is Serine--tRNA ligase.